A 243-amino-acid polypeptide reads, in one-letter code: VQ motif-containing protein 33 (243 aa).

Positions 1–16 are enriched in polar residues; sequence MEVSTSSMSSKPEQMQ. Positions 1–49 are disordered; the sequence is MEVSTSSMSSKPEQMQNPPPMISSPRFQPQIISPHHHDQHQHLSNPYPT. The VQ motif lies at 59–68; the sequence is FKQVVQMLTG. Disordered regions lie at residues 69–98 and 138–162; these read SSTDTTTGKHHEAPSPVNNNNKGSSFSIPP and FTGGNSSHHQSPRFSPRNSSSSENI. Phosphoserine is present on residues S83 and S95. Over residues 84–98 the composition is skewed to polar residues; it reads PVNNNNKGSSFSIPP. Phosphothreonine is present on T139. Residues S148, S152, S165, S167, and S178 each carry the phosphoserine modification. Residues 149–162 show a composition bias toward low complexity; the sequence is PRFSPRNSSSSENI. The segment at 180–243 is disordered; the sequence is VTPLRSNDDP…FPVASPARNS (64 aa). T181 is modified (phosphothreonine). A compositionally biased stretch (polar residues) spans 191-201; the sequence is NKSSPLSLGNS. Residues S218 and S221 each carry the phosphoserine modification. At T222 the chain carries Phosphothreonine. S238 is subject to Phosphoserine.

In terms of processing, phosphorylated on serine and threonine residues by MPK6.

It is found in the nucleus. May modulate WRKY transcription factor activities. This is VQ motif-containing protein 33 from Arabidopsis thaliana (Mouse-ear cress).